The primary structure comprises 300 residues: Acetylglutamate kinase (300 aa).

Substrate contacts are provided by residues 67-68 (GG), R89, and N194.

This sequence belongs to the acetylglutamate kinase family. ArgB subfamily.

Its subcellular location is the cytoplasm. It catalyses the reaction N-acetyl-L-glutamate + ATP = N-acetyl-L-glutamyl 5-phosphate + ADP. It participates in amino-acid biosynthesis; L-arginine biosynthesis; N(2)-acetyl-L-ornithine from L-glutamate: step 2/4. In terms of biological role, catalyzes the ATP-dependent phosphorylation of N-acetyl-L-glutamate. In Saccharophagus degradans (strain 2-40 / ATCC 43961 / DSM 17024), this protein is Acetylglutamate kinase.